We begin with the raw amino-acid sequence, 141 residues long: Actin-depolymerizing factor 9 (141 aa).

Position 8 is a phosphoserine (S8). The 134-residue stretch at 8-141 (SGMWMTDDCK…GFDKIQDRAK (134 aa)) folds into the ADF-H domain.

It belongs to the actin-binding proteins ADF family.

The protein resides in the cytoplasm. It localises to the cytoskeleton. In terms of biological role, does not display typical F-actin depolymerizing activity. Exhibits a high ability to stabilize and cross-link actin filaments. Functions as an actin bundling protein with the highest efficiency under acidic conditions. May play a role in the modulation of levels of histone H3 lysine 4 trimethylation and H3 lysine 9 and 14 acetylation at the FLC locus. In Arabidopsis thaliana (Mouse-ear cress), this protein is Actin-depolymerizing factor 9 (ADF9).